A 459-amino-acid chain; its full sequence is Elongation factor 1-alpha (459 aa).

Gly2 is subject to N,N,N-trimethylglycine. Position 3 is an N6,N6-dimethyllysine; alternate (Lys3). An N6-methyllysine; alternate modification is found at Lys3. In terms of domain architecture, tr-type G spans 5 to 239 (KSHINVVVIG…DAIDPPSRPT (235 aa)). Residues 14 to 21 (GHVDSGKS) form a G1 region. 14 to 21 (GHVDSGKS) provides a ligand contact to GTP. N6-methyllysine is present on Lys30. A G2 region spans residues 70 to 74 (GITID). Position 79 is an N6,N6,N6-trimethyllysine (Lys79). Residues 91–94 (DAPG) are G3. GTP contacts are provided by residues 91-95 (DAPGH) and 153-156 (NKMD). Positions 153–156 (NKMD) are G4. The segment at 192-194 (SGF) is G5. Lys315 bears the N6,N6-dimethyllysine; alternate mark. N6-methyllysine; alternate is present on Lys315. The residue at position 389 (Lys389) is an N6-methyllysine.

It belongs to the TRAFAC class translation factor GTPase superfamily. Classic translation factor GTPase family. EF-Tu/EF-1A subfamily.

It is found in the cytoplasm. Its function is as follows. This protein promotes the GTP-dependent binding of aminoacyl-tRNA to the A-site of ribosomes during protein biosynthesis. The chain is Elongation factor 1-alpha (TEF1) from Aureobasidium pullulans (Black yeast).